The sequence spans 314 residues: Leucine-rich repeat-containing protein 59 (314 aa).

Over 1–247 the chain is Cytoplasmic; that stretch reads MNKGKIENIK…VPKAKRSICS (247 aa). LRR repeat units follow at residues 14 to 35, 38 to 60, 61 to 82, 84 to 106, and 107 to 126; these read DGNELDLSLSNLTEVPVKELAA, KATFLDLSCNNLITLTPEFCSLT, HLIKIDLNKNQLVCLPEEIGQL, NLQHLDLYNNKLKMLPIGFSQLK, and SLKWLDLKDNPLEPTLAKAA. A coiled-coil region spans residues 146 to 216; that stretch reads MKVLQEEAEK…AVAAQEQQKK (71 aa). Disordered regions lie at residues 165–197 and 212–237; these read REQEKKKEAKQREKEAREKEAQKKKKAEEKERK and EQQKKKKEEKKKKAAQNQGKKAAPES. Residues 215–225 show a composition bias toward basic residues; sequence KKKKEEKKKKA. The chain crosses the membrane as a helical span at residues 248-268; the sequence is LFFSLLLKLVLLLVIGVSSVV. Residues 269 to 314 are Lumenal-facing; that stretch reads AVCQLTELRKEAFCIPLNVHFEETVRWAQGLDVVQQVIQKMSDLRT.

Interacts with SGO1.

It localises to the microsome membrane. Its subcellular location is the endoplasmic reticulum membrane. It is found in the nucleus envelope. Required for nuclear import of FGF1. This chain is Leucine-rich repeat-containing protein 59 (lrrc59), found in Danio rerio (Zebrafish).